Consider the following 238-residue polypeptide: Major prion protein (238 aa).

The first 15 residues, 1-15 (MLVLFVATWSDLGLC), serve as a signal peptide directing secretion. The interaction with GRB2, ERI3 and SYN1 stretch occupies residues 16-215 (KKRPKPGGWN…ESQAYYQRGS (200 aa)). The tract at residues 18-93 (RPKPGGWNTG…WHKPSKPKTS (76 aa)) is disordered. Repeat copies occupy residues 44–52 (PQGGGGWGQ), 53–60 (PHGGGWGQ), 61–68 (PHGGGWGQ), and 69–76 (PHGGGWGQ). The segment at 44-83 (PQGGGGWGQPHGGGWGQPHGGGWGQPHGGGWGQGGGTHNQ) is 4 X 8 AA tandem repeats of P-H-G-G-G-W-G-Q. Over residues 45-80 (QGGGGWGQPHGGGWGQPHGGGWGQPHGGGWGQGGGT) the composition is skewed to gly residues. Positions 47, 48, 54, 55, 56, 62, 63, 64, 70, 71, and 72 each coordinate Cu(2+). The segment covering 83-93 (QWHKPSKPKTS) has biased composition (basic residues). Residues cysteine 164 and cysteine 199 are joined by a disulfide bond. N-linked (GlcNAc...) asparagine glycosylation is found at asparagine 166 and asparagine 182. Serine 215 is lipidated: GPI-anchor amidated serine. Residues 216-238 (SIVLFSSPPVILLISFLIFLIVG) constitute a propeptide, removed in mature form.

Belongs to the prion family. As to quaternary structure, monomer and homodimer. Has a tendency to aggregate into amyloid fibrils containing a cross-beta spine, formed by a steric zipper of superposed beta-strands. Soluble oligomers may represent an intermediate stage on the path to fibril formation. Copper binding may promote oligomerization. Interacts with GRB2, APP, ERI3/PRNPIP and SYN1. Mislocalized cytosolically exposed PrP interacts with MGRN1; this interaction alters MGRN1 subcellular location and causes lysosomal enlargement. Interacts with KIAA1191.

The protein resides in the cell membrane. It localises to the golgi apparatus. Its primary physiological function is unclear. Has cytoprotective activity against internal or environmental stresses. May play a role in neuronal development and synaptic plasticity. May be required for neuronal myelin sheath maintenance. May play a role in iron uptake and iron homeostasis. Soluble oligomers are toxic to cultured neuroblastoma cells and induce apoptosis (in vitro). Association with GPC1 (via its heparan sulfate chains) targets PRNP to lipid rafts. Also provides Cu(2+) or Zn(2+) for the ascorbate-mediated GPC1 deaminase degradation of its heparan sulfate side chains. The sequence is that of Major prion protein (PRNP) from Theropithecus gelada (Gelada baboon).